Consider the following 148-residue polypeptide: Nucleoside diphosphate kinase (148 aa).

Lysine 9, phenylalanine 57, arginine 85, threonine 91, arginine 102, and asparagine 112 together coordinate ATP. At threonine 91 the chain carries Phosphothreonine. The active-site Pros-phosphohistidine intermediate is histidine 115. Position 122 is a phosphoserine (serine 122).

The protein belongs to the NDK family. In terms of assembly, homotetramer. Requires Mg(2+) as cofactor.

It localises to the cytoplasm. It carries out the reaction a 2'-deoxyribonucleoside 5'-diphosphate + ATP = a 2'-deoxyribonucleoside 5'-triphosphate + ADP. The enzyme catalyses a ribonucleoside 5'-diphosphate + ATP = a ribonucleoside 5'-triphosphate + ADP. Its function is as follows. Major role in the synthesis of nucleoside triphosphates other than ATP. The ATP gamma phosphate is transferred to the NDP beta phosphate via a ping-pong mechanism, using a phosphorylated active-site intermediate. This Bacillus cereus (strain ATCC 14579 / DSM 31 / CCUG 7414 / JCM 2152 / NBRC 15305 / NCIMB 9373 / NCTC 2599 / NRRL B-3711) protein is Nucleoside diphosphate kinase.